A 585-amino-acid polypeptide reads, in one-letter code: Pyruvate kinase (585 aa).

Position 32 (R32) interacts with substrate. Positions 34, 36, 66, and 67 each coordinate K(+). 34–37 is an ATP binding site; that stretch reads NFSH. ATP-binding residues include R73 and K156. Mg(2+) is bound at residue E221. The substrate site is built by G244, D245, and T277. Residue D245 participates in Mg(2+) binding.

Belongs to the pyruvate kinase family. It in the C-terminal section; belongs to the PEP-utilizing enzyme family. Mg(2+) serves as cofactor. The cofactor is K(+).

The catalysed reaction is pyruvate + ATP = phosphoenolpyruvate + ADP + H(+). It functions in the pathway carbohydrate degradation; glycolysis; pyruvate from D-glyceraldehyde 3-phosphate: step 5/5. In Staphylococcus aureus (strain bovine RF122 / ET3-1), this protein is Pyruvate kinase (pyk).